An 87-amino-acid chain; its full sequence is Lantipeptide prochlorosin 3.3 (87 aa).

A propeptide spanning residues 1 to 64 is cleaved from the precursor; it reads MSEEQLKAFI…DEELEAASGG (64 aa). Residue Thr67 is modified to 2,3-didehydrobutyrine. A cross-link (beta-methyllanthionine (Thr-Cys)) is located at residues 75 to 85; the sequence is TAGCYGGTKMC. The segment at residues 78–82 is a cross-link (beta-methyllanthionine (Cys-Thr)); it reads CYGGT.

Cross-links are proved in vitro, when coepressed in E.coli with the ProcM lanthionine synthetase. Post-translationally, the beta-methyllanthionine residues have a DL configuration (with 2S,3S,6R stereochemistry). In terms of processing, maturation of prochlorosin involves the enzymatic conversion of Thr, and Ser into dehydrated AA and the formation of thioether bonds with cysteines. This is followed by membrane translocation and cleavage of the modified precursor.

The protein localises to the secreted. In terms of biological role, lanthionine-containing peptide (lantipeptide) with unknown function. Does not show antibiotic activity against Lactococcus lactis 117 and Bacillus subtilis 6633 bacteria. Organisms that produce this peptide live in oligotrophic environments at very dilute concentrations, suggesting this peptide is not secreted to influence other bacteria. The polypeptide is Lantipeptide prochlorosin 3.3 (Prochlorococcus marinus (strain MIT 9313)).